The primary structure comprises 128 residues: MHCFIIFSVINLALLQLALGASLPTSHATYPQSQPHATKRSFGPAVPSSVNGFGPFGSTYISANQRQSQQSDSNYSYNSGFGPYGGTSISASQHQRQDSQSNYEYYNNGGGLYSKDAKKELKDPSTSA.

Composition is skewed to polar residues over residues 27-36 (HATYPQSQPH) and 87-101 (TSIS…DSQS). 2 disordered regions span residues 27–48 (HATY…AVPS) and 86–128 (GTSI…STSA). Over residues 115–128 (KDAKKELKDPSTSA) the composition is skewed to basic and acidic residues.

In terms of biological role, general role in the development of germlings including formation of the infection structures. The sequence is that of Infection structure-specific protein 56 (INF56) from Uromyces appendiculatus (Rust fungus).